A 166-amino-acid chain; its full sequence is NAD(P)H-quinone oxidoreductase subunit I, chloroplastic (166 aa).

2 consecutive 4Fe-4S ferredoxin-type domains span residues 55-84 (GRIH…VDWK) and 95-124 (LNYS…MTEE). Residues C64, C67, C70, C74, C104, C107, C110, and C114 each coordinate [4Fe-4S] cluster.

Belongs to the complex I 23 kDa subunit family. As to quaternary structure, NDH is composed of at least 16 different subunits, 5 of which are encoded in the nucleus. Requires [4Fe-4S] cluster as cofactor.

It localises to the plastid. Its subcellular location is the chloroplast thylakoid membrane. The catalysed reaction is a plastoquinone + NADH + (n+1) H(+)(in) = a plastoquinol + NAD(+) + n H(+)(out). It carries out the reaction a plastoquinone + NADPH + (n+1) H(+)(in) = a plastoquinol + NADP(+) + n H(+)(out). In terms of biological role, NDH shuttles electrons from NAD(P)H:plastoquinone, via FMN and iron-sulfur (Fe-S) centers, to quinones in the photosynthetic chain and possibly in a chloroplast respiratory chain. The immediate electron acceptor for the enzyme in this species is believed to be plastoquinone. Couples the redox reaction to proton translocation, and thus conserves the redox energy in a proton gradient. The chain is NAD(P)H-quinone oxidoreductase subunit I, chloroplastic from Pentanema britannica (British yellowhead).